A 163-amino-acid chain; its full sequence is MIEFSLLTKITLSFTILFLILSIISIIKGWKNRFQFIGVTSFSALLTISFFVFTFVPFTHKLIPGAEKYKVVFDDGANQIVIAVSSKLNQDQLVATLEQAASDLFSPGRLSRNNNSFIIKARALSDSIGTTNNSLYLGELDKILDSNTNDFETKIKIFNDSTL.

The protein belongs to the ycf51 family.

Its subcellular location is the plastid. The protein resides in the cyanelle. This is an uncharacterized protein from Cyanophora paradoxa.